Consider the following 269-residue polypeptide: Transcription factor MYB7 (269 aa).

2 consecutive HTH myb-type domains span residues 9-61 (KEHM…INYL) and 62-116 (RPDL…KRKL). DNA-binding regions (H-T-H motif) lie at residues 37-61 (WRSL…INYL) and 89-112 (WSLI…NTHI).

As to quaternary structure, interacts with SAD2. Expressed in anthers. Expressed in pollen grains and mature seeds. Expressed in roots and vasculature of leaves.

It localises to the nucleus. Transcription factor involved in the negative regulation of flavonol biosynthesis. Represses the early phenylpropanoid genes, phenylalanine ammonia-lyase (PAL), cinnamate 4-hydroxylase (C4H) and 4-coumarate-CoA ligase (4CL), as well as the flavonoid-specific genes, flavonoid 3'-hydroxylase (F3'H) and dihydroflavonol 4-reductase (DFR). Plays a role in seed germination inhibition. Negatively regulates the expression of the abscisic acid (ABA) signaling transcription factor ABI5 in seeds. This chain is Transcription factor MYB7, found in Arabidopsis thaliana (Mouse-ear cress).